We begin with the raw amino-acid sequence, 425 residues long: Aspartic protease 2 (425 aa).

The N-terminal stretch at 1 to 16 (MRSILVLVALIGCIAA) is a signal peptide. One can recognise a Peptidase A1 domain in the interval 72-421 (YLGEITIGTP…DIEKKRIGFA (350 aa)). Asp-90 is a catalytic residue. Cysteines 103 and 145 form a disulfide. N-linked (GlcNAc...) asparagine glycosylation is found at Asn-163, Asn-197, and Asn-304. The active site involves Asp-316. Cys-351 and Cys-382 are oxidised to a cystine. N-linked (GlcNAc...) asparagine glycans are attached at residues Asn-354 and Asn-365.

This sequence belongs to the peptidase A1 family. In terms of processing, cleaved into a mature form. In terms of tissue distribution, expressed in intestine, amphidal glands and excretory gland (at protein level).

The protein resides in the secreted. Inhibited by pepstatin A. Functionally, aspartic protease which cleaves several human serum proteins including hemoglobin, fibrinogen and albumin. Appears to cleave preferentially between P1 (Ala, Leu, Val, Phe and Gly) and P1' (Ala and Leu) residues. The sequence is that of Aspartic protease 2 from Necator americanus (Human hookworm).